The sequence spans 388 residues: Outer membrane protein assembly factor BamB (388 aa).

Positions 1-17 are cleaved as a signal peptide; sequence MVLSLLSVMLLSGYKFL.

It belongs to the BamB family. In terms of assembly, part of the Bam complex, which is composed of the outer membrane protein BamA, and four lipoproteins BamB, BamC, BamD and BamE.

The protein localises to the cell outer membrane. Part of the outer membrane protein assembly complex, which is involved in assembly and insertion of beta-barrel proteins into the outer membrane. In Moranella endobia (strain PCIT), this protein is Outer membrane protein assembly factor BamB.